Reading from the N-terminus, the 721-residue chain is WD repeat and coiled-coil-containing protein (721 aa).

Methionine 1 is subject to N-acetylmethionine. WD repeat units follow at residues 55-98 and 154-194; these read GQFE…MESS and NTQG…LHRC. Phosphoserine occurs at positions 299, 468, 501, and 523. The span at 520-537 shows a compositional bias: polar residues; sequence QPASLPRHSSTPDHTSTL. Residues 520 to 553 are disordered; sequence QPASLPRHSSTPDHTSTLEPPRLPQRKNLQSEKE. Threonine 530 carries the post-translational modification Phosphothreonine. Residues 539–545 are interaction with HCK; that stretch reads PPRLPQR. A coiled-coil region spans residues 556–584; the sequence is QLSKEVEILSRNLVEMQRCLSELTNRLHN. 2 positions are modified to phosphoserine: serine 686 and serine 690.

Oligomer. Interacts with HCK (via SH3 domain). Phosphorylated on Tyr when associated with HCK.

This is WD repeat and coiled-coil-containing protein from Homo sapiens (Human).